A 30-amino-acid polypeptide reads, in one-letter code: Trypsin inhibitor 7 (30 aa).

3 cysteine pairs are disulfide-bonded: C4-C21, C11-C23, and C17-C29.

This sequence belongs to the protease inhibitor I7 (squash-type serine protease inhibitor) family.

It localises to the secreted. Strongly inhibits trypsin, weakly inhibits chymotrypsin. This Cyclanthera pedata (Achocha) protein is Trypsin inhibitor 7.